Here is a 400-residue protein sequence, read N- to C-terminus: Capsid protein (400 aa).

Residues 1 to 10 (MDPNLDQDTL) are compositionally biased toward polar residues. Residues 1-54 (MDPNLDQDTLPTHEEIDNDVDSAEEEPPEPPLLPDDIDDDDSHGSRTRRQVKPP) form a disordered region. Positions 16-28 (IDNDVDSAEEEPP) are enriched in acidic residues.

This sequence belongs to the potexvirus capsid protein family.

It is found in the virion. Its function is as follows. Required for genome encapsidation. This Botryotinia fuckeliana (Noble rot fungus) protein is Capsid protein (ORF3).